The primary structure comprises 638 residues: Methionine--tRNA ligase (638 aa).

A 'HIGH' region motif is present at residues 12-22; sequence YYPSDKLHIGH. Positions 127, 130, 144, and 147 each coordinate Zn(2+). Positions 296–300 match the 'KMSKS' region motif; that stretch reads KMSKS. K299 contributes to the ATP binding site. The region spanning 538–638 is the tRNA-binding domain; it reads DFSKVQLRVA…KDIESGSKIS (101 aa).

It belongs to the class-I aminoacyl-tRNA synthetase family. MetG type 2A subfamily. As to quaternary structure, homodimer. Requires Zn(2+) as cofactor.

The protein resides in the cytoplasm. It carries out the reaction tRNA(Met) + L-methionine + ATP = L-methionyl-tRNA(Met) + AMP + diphosphate. Its function is as follows. Is required not only for elongation of protein synthesis but also for the initiation of all mRNA translation through initiator tRNA(fMet) aminoacylation. This Caldanaerobacter subterraneus subsp. tengcongensis (strain DSM 15242 / JCM 11007 / NBRC 100824 / MB4) (Thermoanaerobacter tengcongensis) protein is Methionine--tRNA ligase (metG).